We begin with the raw amino-acid sequence, 419 residues long: MAGFGAMEKFLVEYKSAVEKKLAEYKCNTNTAIELKLVRFPEDLENDIRTFFPEYTHQLFGDDETAFGYKGLKILLYYIAGSLSTMFRVEYASKVDENFDCVEADDVEGKIRQIIPPGFCTNTNDFLSLLEKEADFKPFGTLLHTYSVPSPTGGENFTFQIYKADMTCRGFREYHERLQTFLMWFIETASFIDVDDERWHYFLVFEKYNKDGATLFATVGYMTVYNYYVYPDKTRPRVSQMLILTPFQGQGHGAQLLETVHRYYIASSSVLDITAEDPSKSYVKLRDFVLVKLCQDLPCFSRERLLQGFNEDMAIQAQQKFKINKQHARRVYEILRLLVTDMSDAEQCRSYRLDIKRRLISPYKKKQTDLAKMRKCLRPEELTNQMNQIEISVQHEQLEEQFQELVEDYRRVIERLAQE.

Ala2 carries the post-translational modification N-acetylalanine. An N6-acetyllysine mark is found at Lys9 and Lys15. An interaction with histone H4 N-terminus region spans residues 62-64 (DDE). Ser190 bears the Phosphoserine mark. Residues 225 to 227 (YNY) are interaction with histone H4 N-terminus. Acetyl-CoA is bound by residues 241–243 (MLI) and 248–254 (QGQGHGA). Glu276 serves as the catalytic Proton donor/acceptor. At Ser343 the chain carries Phosphoserine.

Belongs to the HAT1 family. As to quaternary structure, catalytic subunit of the type B histone acetyltransferase (HAT) complex, composed of RBBP7 and HAT1. Interacts with histones H4 and H2A. The interaction is dependent of the ability of RBBP7 to bind to the N-terminus of histones. Component of the histone H3.1 and H3.3 complexes. Phosphorylated by AMPK at Ser-190; phosphorylation increases HAT1 activity.

Its subcellular location is the nucleus matrix. It localises to the mitochondrion. The enzyme catalyses L-lysyl-[protein] + acetyl-CoA = N(6)-acetyl-L-lysyl-[protein] + CoA + H(+). Functionally, histone acetyltransferase that plays a role in different biological processes including cell cycle progression, glucose metabolism, histone production or DNA damage repair. Coordinates histone production and acetylation via H4 promoter binding. Acetylates histone H4 at 'Lys-5' (H4K5ac) and 'Lys-12' (H4K12ac) and, to a lesser extent, histone H2A at 'Lys-5' (H2AK5ac). Drives H4 production by chromatin binding to support chromatin replication and acetylation. Since transcription of H4 genes is tightly coupled to S-phase, plays an important role in S-phase entry and progression. Promotes homologous recombination in DNA repair by facilitating histone turnover and incorporation of acetylated H3.3 at sites of double-strand breaks. In addition, acetylates other substrates such as chromatin-related proteins. Also acetylates RSAD2 which mediates the interaction of ubiquitin ligase UBE4A with RSAD2 leading to RSAD2 ubiquitination and subsequent degradation. This chain is Histone acetyltransferase type B catalytic subunit (Hat1), found in Rattus norvegicus (Rat).